A 143-amino-acid chain; its full sequence is Deoxyuridine 5'-triphosphate nucleotidohydrolase (143 aa).

The dUMP site is built by serine 65, valine 78, arginine 132, and glycine 138.

It belongs to the dUTPase family. Homotrimer. Mg(2+) is required as a cofactor.

The catalysed reaction is dUTP + H2O = dUMP + diphosphate + H(+). The protein operates within pyrimidine metabolism; dUMP biosynthesis; dUMP from dCTP (dUTP route): step 2/2. Involved in nucleotide metabolism via production of dUMP, the immediate precursor of thymidine nucleotides, and decreases the intracellular concentration of dUTP so that uracil cannot be incorporated into DNA. This Antonospora locustae (Microsporidian parasite) protein is Deoxyuridine 5'-triphosphate nucleotidohydrolase (DUT1).